A 227-amino-acid polypeptide reads, in one-letter code: DNA repair protein RecO (227 aa).

It belongs to the RecO family.

Its function is as follows. Involved in DNA repair and RecF pathway recombination. This is DNA repair protein RecO from Pseudomonas putida (strain GB-1).